We begin with the raw amino-acid sequence, 284 residues long: Phosphatidylglycerol--prolipoprotein diacylglyceryl transferase (284 aa).

Helical transmembrane passes span 21–41 (IEVHWYGLAYACAIVVAFYMA), 62–82 (YFLWAELGIVLGARVGYILIY), 106–126 (FVGIRGMSYHGGLVGFLIASY), 136–156 (LLIYLDLIAISLPLGYVFGRI), 190–210 (PSQLIEAFLEGVIVFLMVMWA), 218–238 (GLLIVVYGLGYSLMRFIAEFY), and 252–272 (LSMGQILSLFMVIVSLGILLY). Arg155 is a binding site for a 1,2-diacyl-sn-glycero-3-phospho-(1'-sn-glycerol).

It belongs to the Lgt family.

Its subcellular location is the cell inner membrane. The enzyme catalyses L-cysteinyl-[prolipoprotein] + a 1,2-diacyl-sn-glycero-3-phospho-(1'-sn-glycerol) = an S-1,2-diacyl-sn-glyceryl-L-cysteinyl-[prolipoprotein] + sn-glycerol 1-phosphate + H(+). It functions in the pathway protein modification; lipoprotein biosynthesis (diacylglyceryl transfer). Its function is as follows. Catalyzes the transfer of the diacylglyceryl group from phosphatidylglycerol to the sulfhydryl group of the N-terminal cysteine of a prolipoprotein, the first step in the formation of mature lipoproteins. This chain is Phosphatidylglycerol--prolipoprotein diacylglyceryl transferase, found in Helicobacter pylori (strain P12).